A 546-amino-acid polypeptide reads, in one-letter code: Chaperonin GroEL 1 (546 aa).

ATP contacts are provided by residues 30–33, Lys51, 87–91, Gly415, 479–481, and Asp495; these read TLGP, DGTTT, and NAA. The segment at 526-546 is disordered; it reads KEDAPMPGGMPGGMGGMGMDM. Gly residues predominate over residues 534-546; sequence GMPGGMGGMGMDM.

It belongs to the chaperonin (HSP60) family. Forms a cylinder of 14 subunits composed of two heptameric rings stacked back-to-back. Interacts with the co-chaperonin GroES.

The protein resides in the cytoplasm. The catalysed reaction is ATP + H2O + a folded polypeptide = ADP + phosphate + an unfolded polypeptide.. In terms of biological role, together with its co-chaperonin GroES, plays an essential role in assisting protein folding. The GroEL-GroES system forms a nano-cage that allows encapsulation of the non-native substrate proteins and provides a physical environment optimized to promote and accelerate protein folding. In Burkholderia vietnamiensis (strain G4 / LMG 22486) (Burkholderia cepacia (strain R1808)), this protein is Chaperonin GroEL 1.